The following is a 547-amino-acid chain: NADH-ubiquinone oxidoreductase chain 5 (547 aa).

15 helical membrane passes run 3–23 (ISIF…IFFV), 45–65 (YFNS…VLVF), 80–100 (YFML…SGCF), 101–121 (SMLV…LFYN), 132–152 (TVLT…STIF), 198–218 (ISSL…IMNF), 227–247 (VIMI…MAAL), 264–284 (MGFS…IHLL), 319–339 (VPYF…GLVF), 352–372 (FFFS…SVFL), 399–419 (VVMN…IWWM), 430–450 (FLYV…VVGF), 460–477 (FVYK…VYGL), 485–505 (LFLG…GFWS), and 512–532 (LYFN…WGCI).

This sequence belongs to the complex I subunit 5 family.

The protein localises to the mitochondrion inner membrane. It carries out the reaction a ubiquinone + NADH + 5 H(+)(in) = a ubiquinol + NAD(+) + 4 H(+)(out). Its function is as follows. Core subunit of the mitochondrial membrane respiratory chain NADH dehydrogenase (Complex I) that is believed to belong to the minimal assembly required for catalysis. Complex I functions in the transfer of electrons from NADH to the respiratory chain. The immediate electron acceptor for the enzyme is believed to be ubiquinone. In Ascaris suum (Pig roundworm), this protein is NADH-ubiquinone oxidoreductase chain 5 (ND5).